The following is an 856-amino-acid chain: MAIYMSTICFGSIECKLPYSPASCGHVTEEREVLASVEPFMDLEAQLSARLLRQKHATVRVLKNGTCAYRYKTDAQIVRIQKKLERKERDEYHFQMAAPSIVSKITIAGGDPPSKYEPQTPKRVIHTTPRVRKVKKHSIIKLTESQMNHLIKQVKRIMSAKKGSVHLINKKSTHVQYKEILGTTRAAVRTAHMMGLRRRVDFRCDMWTTERLKCLARTDKWSNRVHTINIRKGDSGVILNADSLKGHFGRSSGGLFIVRGSHEGKLYDARSKVTQGVLNSMVQFSNAENFWKGLDDNWARMRYPSDHTCIDGLPVEDCGRVAALMTHSILPCYEITCPTCAQQYANLPASDLFKLLHKHARDGLSRLGSDKDRFVHVNKFLVALEHLTEPVDLNLELFNEIFKSIGEKQQAPFKNLNVLNNFFLKGKENTAHEWQVAQLSLLELARFQKNRTDNIKKGDISFFRNKLSAKANWNLYLSCDNQLDKNANFLWGQREYHAKRFFSNFFEEVDPAKGYSAYEIRKHPNGTRKLSIGNLVVPLDLAEFRQKMKGDYRKQPGVSKRCTSSKDGNYVYPCCCTTLDDGSAIESTFYPPTKKHLVIGNSGDQKYVDLPKGDSEMLYIAKQGYCYINVFLAMLINVSEEDAKDFTKKVRDMCVPKLGTWPTMMDLATTCAQMRIFYPDVHDAELPRILVDHDTQTCHVVDSFGSQTTGYHILKASSVSQLILFANDELESEIKHYRVGGVPNACPELGSTISPFREGGVIMSESAALKLLLKGIFRPKVMRQLLLDEPHLLILSILSPGILMAMYNNGIFELAVRLWINEKQSIAMIASLLSALALRVSAAETLVAQRIIIDAA.

One can recognise a Peptidase S30 domain in the interval 141-284 (KLTESQMNHL…QGVLNSMVQF (144 aa)). Catalysis depends on for P1 proteinase activity residues His-192, Asp-201, and Ser-235. Residues 592 to 594 (PTK) carry the Involved in virions binding and aphid transmission motif. The Peptidase C6 domain maps to 618–740 (LYIAKQGYCY…ESEIKHYRVG (123 aa)). Catalysis depends on for helper component proteinase activity residues Cys-626 and His-699.

The protein belongs to the potyviridae genome polyprotein family. Post-translationally, genome polyprotein of potyviruses undergoes post-translational proteolytic processing by the main proteinase NIa-pro resulting in the production of at least ten individual proteins. The P1 proteinase and the HC-pro cleave only their respective C-termini autocatalytically. 6K1 is essential for proper proteolytic separation of P3 from CI.

It catalyses the reaction Hydrolyzes a Gly-|-Gly bond at its own C-terminus, commonly in the sequence -Tyr-Xaa-Val-Gly-|-Gly, in the processing of the potyviral polyprotein.. Required for aphid transmission and also has proteolytic activity. Only cleaves a Gly-Gly dipeptide at its own C-terminus. Interacts with virions and aphid stylets. Acts as a suppressor of RNA-mediated gene silencing, also known as post-transcriptional gene silencing (PTGS), a mechanism of plant viral defense that limits the accumulation of viral RNAs. May have RNA-binding activity. The chain is Genome polyprotein from Potato virus Y (strain C) (PVY).